The chain runs to 495 residues: Thiosulfate sulfurtransferase/rhodanese-like domain-containing protein 2 (495 aa).

A Phosphoserine modification is found at serine 268. One can recognise a Rhodanese domain in the interval 300–395 (EQGNTIILDC…YLEEFPDGFY (96 aa)). Cysteine 354 functions as the Cysteine persulfide intermediate in the catalytic mechanism.

The chain is Thiosulfate sulfurtransferase/rhodanese-like domain-containing protein 2 (Tstd2) from Mus musculus (Mouse).